A 237-amino-acid chain; its full sequence is Ribose-5-phosphate isomerase A (237 aa).

Substrate contacts are provided by residues 28-31 (SGST), 83-86 (DGAD), and 97-100 (KGRG). E106 serves as the catalytic Proton acceptor. K124 contributes to the substrate binding site.

It belongs to the ribose 5-phosphate isomerase family. In terms of assembly, homodimer.

It catalyses the reaction aldehydo-D-ribose 5-phosphate = D-ribulose 5-phosphate. The protein operates within carbohydrate degradation; pentose phosphate pathway; D-ribose 5-phosphate from D-ribulose 5-phosphate (non-oxidative stage): step 1/1. Functionally, catalyzes the reversible conversion of ribose-5-phosphate to ribulose 5-phosphate. The protein is Ribose-5-phosphate isomerase A of Thermomicrobium roseum (strain ATCC 27502 / DSM 5159 / P-2).